The following is a 275-amino-acid chain: NH(3)-dependent NAD(+) synthetase (275 aa).

50–57 (GISGGVDS) serves as a coordination point for ATP. Asp56 provides a ligand contact to Mg(2+). Residue Arg147 participates in deamido-NAD(+) binding. Thr167 is a binding site for ATP. Glu172 contributes to the Mg(2+) binding site. The deamido-NAD(+) site is built by Lys180 and Asp187. 2 residues coordinate ATP: Lys196 and Thr218. 267–268 (HK) serves as a coordination point for deamido-NAD(+).

Belongs to the NAD synthetase family. Homodimer.

The enzyme catalyses deamido-NAD(+) + NH4(+) + ATP = AMP + diphosphate + NAD(+) + H(+). It functions in the pathway cofactor biosynthesis; NAD(+) biosynthesis; NAD(+) from deamido-NAD(+) (ammonia route): step 1/1. In terms of biological role, catalyzes the ATP-dependent amidation of deamido-NAD to form NAD. Uses ammonia as a nitrogen source. The polypeptide is NH(3)-dependent NAD(+) synthetase (Pseudomonas entomophila (strain L48)).